The sequence spans 257 residues: Anamorsin homolog (257 aa).

Positions 1-134 (MSDRKNVLFV…KVGSSDKVTL (134 aa)) are N-terminal SAM-like domain. A linker region spans residues 135–168 (NPEMKENVVSAWKLDDNNSETISEDDLLEADDLI). Positions 178, 187, 190, and 192 each coordinate [2Fe-2S] cluster. A fe-S binding site A region spans residues 178 to 192 (CATTKKAKACKDCSC). Residues C218, C221, C229, and C232 each contribute to the [4Fe-4S] cluster site. Short sequence motifs (cx2C motif) lie at residues 218–221 (CGSC) and 229–232 (CASC). The segment at 218 to 232 (CGSCYLGDAFRCASC) is fe-S binding site B.

It belongs to the anamorsin family. As to quaternary structure, monomer. [2Fe-2S] cluster serves as cofactor. The cofactor is [4Fe-4S] cluster.

Its subcellular location is the cytoplasm. It is found in the mitochondrion intermembrane space. Functionally, component of the cytosolic iron-sulfur (Fe-S) protein assembly (CIA) machinery. Required for the maturation of extramitochondrial Fe-S proteins. Part of an electron transfer chain functioning in an early step of cytosolic Fe-S biogenesis, facilitating the de novo assembly of a [4Fe-4S] cluster on the cytosolic Fe-S scaffold complex. Electrons are transferred from NADPH via a FAD- and FMN-containing diflavin oxidoreductase. Together with the diflavin oxidoreductase, also required for the assembly of the diferric tyrosyl radical cofactor of ribonucleotide reductase (RNR), probably by providing electrons for reduction during radical cofactor maturation in the catalytic small subunit. The protein is Anamorsin homolog of Acyrthosiphon pisum (Pea aphid).